The following is a 311-amino-acid chain: Methionyl-tRNA formyltransferase (311 aa).

112-115 (SLLP) contacts (6S)-5,6,7,8-tetrahydrofolate.

This sequence belongs to the Fmt family.

It carries out the reaction L-methionyl-tRNA(fMet) + (6R)-10-formyltetrahydrofolate = N-formyl-L-methionyl-tRNA(fMet) + (6S)-5,6,7,8-tetrahydrofolate + H(+). Attaches a formyl group to the free amino group of methionyl-tRNA(fMet). The formyl group appears to play a dual role in the initiator identity of N-formylmethionyl-tRNA by promoting its recognition by IF2 and preventing the misappropriation of this tRNA by the elongation apparatus. The polypeptide is Methionyl-tRNA formyltransferase (Sinorhizobium fredii (strain NBRC 101917 / NGR234)).